Here is an 87-residue protein sequence, read N- to C-terminus: Retinal rod rhodopsin-sensitive cGMP 3',5'-cyclic phosphodiesterase subunit gamma (87 aa).

M1 is subject to N-acetylmethionine. Basic and acidic residues predominate over residues 1-12 (MNLEPPKAEIRS). The interval 1–55 (MNLEPPKAEIRSATRVIGGPVTPRKGPPKFKQRQTRQFKSKPPKKGVQGFGDDIP) is disordered. Residues 26–44 (GPPKFKQRQTRQFKSKPPK) show a composition bias toward basic residues.

The protein belongs to the rod/cone cGMP-PDE gamma subunit family. In terms of assembly, oligomer composed of two catalytic chains (alpha and beta), an inhibitory chain (gamma) and the delta chain.

The catalysed reaction is 3',5'-cyclic GMP + H2O = GMP + H(+). Functionally, participates in processes of transmission and amplification of the visual signal. cGMP-PDEs are the effector molecules in G-protein-mediated phototransduction in vertebrate rods and cones. This chain is Retinal rod rhodopsin-sensitive cGMP 3',5'-cyclic phosphodiesterase subunit gamma (PDE6G), found in Canis lupus familiaris (Dog).